A 361-amino-acid polypeptide reads, in one-letter code: Rhomboid domain-containing protein 2 (361 aa).

5 helical membrane-spanning segments follow: residues 19–39 (SATF…LFLL), 63–83 (LVTY…AIII), 100–120 (CFFT…FESV), 158–178 (FGVV…SWLI), and 182–202 (SFLS…TYCY). Disordered regions lie at residues 265 to 287 (PSYP…PPGH) and 318 to 361 (PASA…VAMP). Polar residues-rich tracts occupy residues 267 to 276 (YPVTQMQHAS) and 318 to 328 (PASAGTSQGVQ).

This sequence belongs to the peptidase S54 family. Might form homotrimers; these trimers are only formed in retina. In terms of tissue distribution, widely expressed, including in retina and brain (at protein level), as well as in kidney, testis and ovary. Expressed in all layers of the retina, including inner segments of photoreceptor cells and ganglion cells (at protein level).

It is found in the golgi apparatus. The protein localises to the cis-Golgi network membrane. The protein is Rhomboid domain-containing protein 2 (Rhbdd2) of Mus musculus (Mouse).